The following is a 132-amino-acid chain: Small ribosomal subunit protein uS8 (132 aa).

It belongs to the universal ribosomal protein uS8 family. Part of the 30S ribosomal subunit. Contacts proteins S5 and S12.

In terms of biological role, one of the primary rRNA binding proteins, it binds directly to 16S rRNA central domain where it helps coordinate assembly of the platform of the 30S subunit. The sequence is that of Small ribosomal subunit protein uS8 from Ligilactobacillus salivarius (strain UCC118) (Lactobacillus salivarius).